Consider the following 90-residue polypeptide: U7-theraphotoxin-Hhn1a 1 (90 aa).

The signal sequence occupies residues 1–19 (MKTAIFTVVLALAVFAVLS). A propeptide spanning residues 20–50 (FGWEANEKALSEEFTELIHEKEAASETEARE) is cleaved from the precursor. 3 cysteine pairs are disulfide-bonded: C51–C65, C58–C70, and C64–C81.

It belongs to the neurotoxin 10 (Hwtx-1) family. 13 (Hntx-13) subfamily. Expressed by the venom gland.

The protein resides in the secreted. Functionally, ion channel inhibitor. This Cyriopagopus hainanus (Chinese bird spider) protein is U7-theraphotoxin-Hhn1a 1.